Consider the following 116-residue polypeptide: Non-specific lipid-transfer protein AP10 (116 aa).

Positions 1–26 (MKGTSMGVAILAMIVMAQLMVHPSVA) are cleaved as a signal peptide. Disulfide bonds link cysteine 29/cysteine 76, cysteine 39/cysteine 53, cysteine 54/cysteine 98, and cysteine 74/cysteine 112.

The protein belongs to the plant LTP family. In germinating seeds, detected in the entire surface of the cotyledons, shoot meristem, inter-cotyledon space, primary xylem and immature vascular elements (at protein level). Expressed in seeds, but not the aerial parts of the plant.

It localises to the secreted. Its subcellular location is the extracellular space. The protein localises to the membrane. Functionally, plant non-specific lipid-transfer proteins transfer phospholipids as well as galactolipids across membranes. May play a role in wax or cutin deposition in the cell walls of expanding epidermal cells and certain secretory tissues. Permeabilizes the membrane of fungal spores, inhibits germination of the spores of the fungus F.solani at a concentration of 40 ug/ml. Inhibits the growth of F.solani with an IC(50) of 6.5 ug/ml, weakly inhibits the growth of the fungus A.alternata. Binds oleoyl-CoA. In Helianthus annuus (Common sunflower), this protein is Non-specific lipid-transfer protein AP10.